The following is a 545-amino-acid chain: CTP synthase (545 aa).

Residues 1 to 266 (MATNYIFVTG…DDFVCERFRL (266 aa)) are amidoligase domain. A CTP-binding site is contributed by Ser-14. Ser-14 contacts UTP. ATP-binding positions include 15 to 20 (SLGKGI) and Asp-72. 2 residues coordinate Mg(2+): Asp-72 and Glu-140. CTP is bound by residues 147 to 149 (DIE), 187 to 192 (KTKPTQ), and Lys-223. UTP contacts are provided by residues 187-192 (KTKPTQ) and Lys-223. 239 to 241 (KDV) is a binding site for ATP. Residues 291 to 542 (TIGMVGKYTE…VKAAYENHKK (252 aa)) enclose the Glutamine amidotransferase type-1 domain. Residue Gly-352 participates in L-glutamine binding. Cys-379 (nucleophile; for glutamine hydrolysis) is an active-site residue. L-glutamine is bound by residues 380–383 (LGMQ), Glu-403, and Arg-470. Residues His-515 and Glu-517 contribute to the active site.

Belongs to the CTP synthase family. In terms of assembly, homotetramer.

It carries out the reaction UTP + L-glutamine + ATP + H2O = CTP + L-glutamate + ADP + phosphate + 2 H(+). The enzyme catalyses L-glutamine + H2O = L-glutamate + NH4(+). The catalysed reaction is UTP + NH4(+) + ATP = CTP + ADP + phosphate + 2 H(+). Its pathway is pyrimidine metabolism; CTP biosynthesis via de novo pathway; CTP from UDP: step 2/2. With respect to regulation, allosterically activated by GTP, when glutamine is the substrate; GTP has no effect on the reaction when ammonia is the substrate. The allosteric effector GTP functions by stabilizing the protein conformation that binds the tetrahedral intermediate(s) formed during glutamine hydrolysis. Inhibited by the product CTP, via allosteric rather than competitive inhibition. Functionally, catalyzes the ATP-dependent amination of UTP to CTP with either L-glutamine or ammonia as the source of nitrogen. Regulates intracellular CTP levels through interactions with the four ribonucleotide triphosphates. The polypeptide is CTP synthase (Haemophilus influenzae (strain PittGG)).